We begin with the raw amino-acid sequence, 521 residues long: MAP kinase-activated protein kinase mak-1 (521 aa).

Residues 1–12 (MMFEYEEDEDPM) show a composition bias toward acidic residues. The tract at residues 1–36 (MMFEYEEDEDPMEQQKHEEFKHHSTDHSGSPQENPF) is disordered. Positions 13–26 (EQQKHEEFKHHSTD) are enriched in basic and acidic residues. One can recognise a Protein kinase domain in the interval 144–405 (TISAEIIGIG…IHELMATPLV (262 aa)). Residues 150-158 (IGIGESGKV) and Lys173 contribute to the ATP site. Asp266 acts as the Proton acceptor in catalysis.

This sequence belongs to the protein kinase superfamily. CAMK Ser/Thr protein kinase family. As to quaternary structure, may interact (via protein kinase domain) with unc-22 (via protein kinase and CRD domains). Mg(2+) serves as cofactor. Autophosphorylated in vitro. As to expression, expressed in body wall muscles (at protein level). Expressed in intestine.

The protein localises to the cytoplasm. Its subcellular location is the myofibril. It is found in the sarcomere. It localises to the a band. It catalyses the reaction L-seryl-[protein] + ATP = O-phospho-L-seryl-[protein] + ADP + H(+). The catalysed reaction is L-threonyl-[protein] + ATP = O-phospho-L-threonyl-[protein] + ADP + H(+). Its function is as follows. Serine/threonine-protein kinase which may play a role in body wall muscle contraction. May phosphorylate unc-22/twitchin. This Caenorhabditis elegans protein is MAP kinase-activated protein kinase mak-1.